Reading from the N-terminus, the 271-residue chain is GPN-loop GTPase 3 (271 aa).

13-18 (GAGKST) lines the GTP pocket. A Gly-Pro-Asn (GPN)-loop; involved in dimer interface motif is present at residues 70-72 (GPN). 173 to 176 (SKLD) provides a ligand contact to GTP.

Belongs to the GPN-loop GTPase family. Heterodimers with GPN1 or GPN2. Binds to RNA polymerase II (RNAPII).

Functionally, small GTPase required for proper nuclear import of RNA polymerase II and III (RNAPII and RNAPIII). May act at an RNAP assembly step prior to nuclear import. This is GPN-loop GTPase 3 from Kluyveromyces lactis (strain ATCC 8585 / CBS 2359 / DSM 70799 / NBRC 1267 / NRRL Y-1140 / WM37) (Yeast).